Consider the following 172-residue polypeptide: MIIYRDCISQDEMFSDIYKITEVANGLCLEVEGKMVSRKEGEIDDALIGGNASAEGPEGDGTEATVITGVDIVMNHHLQETSFTKESYKKYIKDYMKSIKARLEETKPERVKPFMTGAAEQVKHILGNFKNYQFFVGENMNPDGMVGLLDFREDGVTPYMIFFKDGLEMEKC.

A TCTP domain is found at 1–172; sequence MIIYRDCISQ…FKDGLEMEKC (172 aa).

This sequence belongs to the TCTP family. As to expression, expressed by the venom gland.

The protein localises to the secreted. In terms of biological role, venom protein that causes edema, enhances vascular permeability and is likely related to the inflammatory activity of the venom. This is Translationally-controlled tumor protein homolog from Crotalus adamanteus (Eastern diamondback rattlesnake).